A 786-amino-acid chain; its full sequence is ATP-dependent RNA helicase SUPV3L1, mitochondrial (786 aa).

The N-terminal 22 residues, 1–22 (MSFSRALLWARLPAGRQAGHRA), are a transit peptide targeting the mitochondrion. Lysine 99 is modified (N6-acetyllysine). The Helicase ATP-binding domain maps to 194–334 (DARAMQRKII…AIDLVMELMY (141 aa)). 207–214 (GPTNSGKT) is a binding site for ATP. Residue lysine 220 is modified to N6-acetyllysine. A Helicase C-terminal domain is found at 353-518 (VLDHALESLD…GLHPTAEQIE (166 aa)). The tract at residues 650–786 (PDASLIRDLQ…RRKKKEPDSD (137 aa)) is interaction with LAMTOR5, important for protein stability. Disordered stretches follow at residues 690 to 730 (GFPS…DAGE) and 749 to 786 (KQLE…PDSD). The span at 693–705 (SGSQSRLSGTLKS) shows a compositional bias: polar residues. Serine 725 carries the post-translational modification Phosphoserine. Residues 749-771 (KQLEKEWMTQQTEHNKEKTESGT) are compositionally biased toward basic and acidic residues.

Belongs to the helicase family. As to quaternary structure, homodimer; in free form. Component of the mitochondrial degradosome (mtEXO) complex which is a heteropentamer containing 2 copies of SUPV3L1 and 3 copies of PNPT1. As part of mitochondrial degradosome complex, interacts with GRSF1 in a RNA-dependent manner; the interaction enhances the activity of the complex. Interacts with LAMTOR5/HBXIP, WRN and BLM. Requires Mg(2+) as cofactor. The cofactor is Mn(2+). Broadly expressed.

Its subcellular location is the nucleus. The protein resides in the mitochondrion matrix. The protein localises to the mitochondrion nucleoid. The enzyme catalyses ATP + H2O = ADP + phosphate + H(+). Helicase activity toward DNA substrate is inhibited by micromolar concentrations of 5,6-dichloro-1-(beta-D-ribofuranosyl)benzotriazole (DRBT) and 4,5,6,7-tetrabromobenzotriazole (TBBT). Helicase activity toward RNA substrate is inhibited by elevated concentrations of TBBT. Inhibited by some ring-expanded nucleoside analogs. In terms of biological role, major helicase player in mitochondrial RNA metabolism. Component of the mitochondrial degradosome (mtEXO) complex, that degrades 3' overhang double-stranded RNA with a 3'-to-5' directionality in an ATP-dependent manner. Involved in the degradation of non-coding mitochondrial transcripts (MT-ncRNA) and tRNA-like molecules. ATPase and ATP-dependent multisubstrate helicase, able to unwind double-stranded (ds) DNA and RNA, and RNA/DNA heteroduplexes in the 5'-to-3' direction. Plays a role in the RNA surveillance system in mitochondria; regulates the stability of mature mRNAs, the removal of aberrantly formed mRNAs and the rapid degradation of non coding processing intermediates. Also implicated in recombination and chromatin maintenance pathways. May protect cells from apoptosis. Associates with mitochondrial DNA. This chain is ATP-dependent RNA helicase SUPV3L1, mitochondrial (SUPV3L1), found in Homo sapiens (Human).